Reading from the N-terminus, the 316-residue chain is Porphobilinogen deaminase (316 aa).

An S-(dipyrrolylmethanemethyl)cysteine modification is found at cysteine 245.

It belongs to the HMBS family. In terms of assembly, monomer. Dipyrromethane serves as cofactor.

It catalyses the reaction 4 porphobilinogen + H2O = hydroxymethylbilane + 4 NH4(+). It functions in the pathway porphyrin-containing compound metabolism; protoporphyrin-IX biosynthesis; coproporphyrinogen-III from 5-aminolevulinate: step 2/4. It participates in porphyrin-containing compound metabolism; chlorophyll biosynthesis. Functionally, tetrapolymerization of the monopyrrole PBG into the hydroxymethylbilane pre-uroporphyrinogen in several discrete steps. In Prochlorococcus marinus (strain AS9601), this protein is Porphobilinogen deaminase.